Here is a 99-residue protein sequence, read N- to C-terminus: Integration host factor subunit alpha (99 aa).

The disordered stretch occupies residues 49–75 (FGNFDLRDKNQRPGRNPKTGEDIPITA).

Belongs to the bacterial histone-like protein family. In terms of assembly, heterodimer of an alpha and a beta chain.

Its function is as follows. This protein is one of the two subunits of integration host factor, a specific DNA-binding protein that functions in genetic recombination as well as in transcriptional and translational control. This is Integration host factor subunit alpha from Salmonella agona (strain SL483).